The sequence spans 64 residues: Frontoxin IV (64 aa).

5 disulfides stabilise this stretch: C3-C24, C6-C11, C17-C41, C45-C57, and C58-C63.

In terms of tissue distribution, expressed by the venom gland.

It localises to the secreted. Functionally, produces peripheral paralysis by blocking neuromuscular transmission at the postsynaptic site. Binds to the muscular nicotinic acetylcholine receptor (nAChR). This Micrurus frontalis (Coral snake) protein is Frontoxin IV.